The chain runs to 264 residues: MKPTTISHLRQWKQEQRKFATITAYDASFSRLFFEQGIRVMLVGDSLGMTVQGHDSTLPVTTHDIVYHTQCVRRGAPLALVLSDMPFMTYATPEQTFSQAAELMRAGANMVKLEGGSWLAPTVKMLTERAVPVCGHLGLTPQSVNIFGGYKIQGRSESDANQLLADALALEEAGAQLLVLECVPVALAKRVTEALSIPVIGIGAGNVTDGQILVMHDALGITGDSTPKFAKNFLAQSGDIRTAVRLYSQEVEQGIYPAEEHSFH.

Residues aspartate 45 and aspartate 84 each contribute to the Mg(2+) site. 3-methyl-2-oxobutanoate contacts are provided by residues 45–46 (DS), aspartate 84, and lysine 112. Glutamate 114 contributes to the Mg(2+) binding site. Catalysis depends on glutamate 181, which acts as the Proton acceptor.

This sequence belongs to the PanB family. In terms of assembly, homodecamer; pentamer of dimers. Mg(2+) is required as a cofactor.

It is found in the cytoplasm. The catalysed reaction is 3-methyl-2-oxobutanoate + (6R)-5,10-methylene-5,6,7,8-tetrahydrofolate + H2O = 2-dehydropantoate + (6S)-5,6,7,8-tetrahydrofolate. It participates in cofactor biosynthesis; (R)-pantothenate biosynthesis; (R)-pantoate from 3-methyl-2-oxobutanoate: step 1/2. Catalyzes the reversible reaction in which hydroxymethyl group from 5,10-methylenetetrahydrofolate is transferred onto alpha-ketoisovalerate to form ketopantoate. In Pectobacterium atrosepticum (strain SCRI 1043 / ATCC BAA-672) (Erwinia carotovora subsp. atroseptica), this protein is 3-methyl-2-oxobutanoate hydroxymethyltransferase.